Reading from the N-terminus, the 123-residue chain is Large ribosomal subunit protein uL14c (123 aa).

The protein belongs to the universal ribosomal protein uL14 family. Part of the 50S ribosomal subunit.

The protein localises to the plastid. The protein resides in the chloroplast. Functionally, binds to 23S rRNA. The protein is Large ribosomal subunit protein uL14c of Lolium perenne (Perennial ryegrass).